A 1168-amino-acid polypeptide reads, in one-letter code: DNA-directed RNA polymerase subunit beta (1168 aa).

The protein belongs to the RNA polymerase beta chain family. As to quaternary structure, the RNAP catalytic core consists of 2 alpha, 1 beta, 1 beta' and 1 omega subunit. When a sigma factor is associated with the core the holoenzyme is formed, which can initiate transcription.

The enzyme catalyses RNA(n) + a ribonucleoside 5'-triphosphate = RNA(n+1) + diphosphate. DNA-dependent RNA polymerase catalyzes the transcription of DNA into RNA using the four ribonucleoside triphosphates as substrates. The chain is DNA-directed RNA polymerase subunit beta from Corynebacterium kroppenstedtii (strain DSM 44385 / JCM 11950 / CIP 105744 / CCUG 35717).